A 477-amino-acid chain; its full sequence is Proton-coupled amino acid transporter 3 (477 aa).

Topologically, residues Met-1–Gln-54 are cytoplasmic. Residues Gly-19–Lys-40 show a composition bias toward low complexity. The segment at Gly-19–Pro-43 is disordered. The chain crosses the membrane as a helical span at residues Ile-55 to Val-75. Over Lys-76–Asn-77 the chain is Extracellular. The helical transmembrane segment at Ala-78 to Met-98 threads the bilayer. The Cytoplasmic portion of the chain corresponds to Asp-99–Tyr-144. A helical membrane pass occupies residues Val-145–Leu-165. At Ala-166–Leu-202 the chain is on the extracellular side. Residues Thr-203–Phe-223 form a helical membrane-spanning segment. Topologically, residues Ser-224–Thr-225 are cytoplasmic. Residues Leu-226–Pro-246 form a helical membrane-spanning segment. Residues His-247–Thr-259 are Extracellular-facing. A helical membrane pass occupies residues Phe-260–Leu-280. The Cytoplasmic segment spans residues Lys-281–Pro-291. The chain crosses the membrane as a helical span at residues Ala-292–Gly-312. Residues Tyr-313–Gly-344 are Extracellular-facing. The chain crosses the membrane as a helical span at residues Ile-345 to Val-365. The Cytoplasmic portion of the chain corresponds to Ser-366–Leu-374. Residues Phe-375–Ile-395 traverse the membrane as a helical segment. Residues Pro-396–Asp-399 lie on the Extracellular side of the membrane. The chain crosses the membrane as a helical span at residues Leu-400–Leu-420. At Leu-421–Ser-432 the chain is on the cytoplasmic side. Residues Cys-433–Gly-453 traverse the membrane as a helical segment. Over Thr-454–Ile-477 the chain is Extracellular.

The protein belongs to the amino acid/polyamine transporter 2 family. As to expression, specifically expressed in testis.

Its subcellular location is the membrane. This chain is Proton-coupled amino acid transporter 3 (Slc36a3), found in Mus musculus (Mouse).